Reading from the N-terminus, the 156-residue chain is Ribosomal RNA large subunit methyltransferase H (156 aa).

S-adenosyl-L-methionine contacts are provided by residues leucine 72, glycine 104, and 123-128; that span reads FGKMVW.

It belongs to the RNA methyltransferase RlmH family. In terms of assembly, homodimer.

The protein localises to the cytoplasm. The catalysed reaction is pseudouridine(1915) in 23S rRNA + S-adenosyl-L-methionine = N(3)-methylpseudouridine(1915) in 23S rRNA + S-adenosyl-L-homocysteine + H(+). In terms of biological role, specifically methylates the pseudouridine at position 1915 (m3Psi1915) in 23S rRNA. In Ruegeria sp. (strain TM1040) (Silicibacter sp.), this protein is Ribosomal RNA large subunit methyltransferase H.